A 358-amino-acid chain; its full sequence is Molybdenum import ATP-binding protein ModC (358 aa).

Positions 2-234 (NDDISASFFS…PDLPLAHLEE (233 aa)) constitute an ABC transporter domain. Position 34–41 (34–41 (GRSGSGKT)) interacts with ATP. Positions 293–358 (LSSISNCIPV…AQVKSVALID (66 aa)) constitute a Mop domain.

This sequence belongs to the ABC transporter superfamily. Molybdate importer (TC 3.A.1.8) family. As to quaternary structure, the complex is composed of two ATP-binding proteins (ModC), two transmembrane proteins (ModB) and a solute-binding protein (ModA).

It localises to the cell inner membrane. The enzyme catalyses molybdate(out) + ATP + H2O = molybdate(in) + ADP + phosphate + H(+). Functionally, part of the ABC transporter complex ModABC involved in molybdenum import. Responsible for energy coupling to the transport system. The polypeptide is Molybdenum import ATP-binding protein ModC (Hahella chejuensis (strain KCTC 2396)).